The sequence spans 335 residues: Fructose-1,6-bisphosphatase class 1 (335 aa).

4 residues coordinate Mg(2+): Glu92, Asp114, Leu116, and Asp117. Substrate is bound by residues Asp117–Ser120, Asn209, and Lys275. Residue Glu281 participates in Mg(2+) binding.

This sequence belongs to the FBPase class 1 family. As to quaternary structure, homotetramer. Mg(2+) is required as a cofactor.

The protein resides in the cytoplasm. It catalyses the reaction beta-D-fructose 1,6-bisphosphate + H2O = beta-D-fructose 6-phosphate + phosphate. It functions in the pathway carbohydrate biosynthesis; gluconeogenesis. The polypeptide is Fructose-1,6-bisphosphatase class 1 (Verminephrobacter eiseniae (strain EF01-2)).